The chain runs to 471 residues: ATP synthase subunit beta, chloroplastic (471 aa).

Residue Gly151–Thr158 participates in ATP binding.

The protein belongs to the ATPase alpha/beta chains family. As to quaternary structure, F-type ATPases have 2 components, CF(1) - the catalytic core - and CF(0) - the membrane proton channel. CF(1) has five subunits: alpha(3), beta(3), gamma(1), delta(1), epsilon(1). CF(0) has four main subunits: a(1), b(1), b'(1) and c(9-12).

Its subcellular location is the plastid. It is found in the chloroplast thylakoid membrane. The enzyme catalyses ATP + H2O + 4 H(+)(in) = ADP + phosphate + 5 H(+)(out). Its function is as follows. Produces ATP from ADP in the presence of a proton gradient across the membrane. The catalytic sites are hosted primarily by the beta subunits. In Rhodomonas salina (Cryptomonas salina), this protein is ATP synthase subunit beta, chloroplastic.